Here is a 156-residue protein sequence, read N- to C-terminus: Extracellular giant hemoglobin major globin subunit A1 (156 aa).

Residues 1-16 (MKVLIIFACLVVMASA) form the signal peptide. The 140-residue stretch at 17-156 (VCNRLEQILV…YERIASGISG (140 aa)) folds into the Globin domain. Cysteines 18 and 146 form a disulfide. Cys-79 is a binding site for hydrogen sulfide. His-110 serves as a coordination point for heme b.

Belongs to the globin family. As to quaternary structure, the 400 kDa hemoglobin consists of a spherical 24-mer arranged as a double layer of dome-shaped dodecamers. Each dodecamer is composed of the 3-fold trimer of the tetramer A1-A2-B1-B2 having one intra-tetramer (A1-B2) disulfide bond and one inter-tetramer (B1-B2) disulfide bond per tetramer.

It localises to the secreted. Its function is as follows. The extracellular giant hemoglobin is able to bind and transport oxygen and hydrosulfide simultaneously and reversibly at two different sites. The chain is Extracellular giant hemoglobin major globin subunit A1 (ghbA1) from Oligobrachia mashikoi (Beard worm).